The chain runs to 80 residues: Putative ATP-dependent Clp protease proteolytic subunit (80 aa).

Histidine 19 is a catalytic residue.

This sequence belongs to the peptidase S14 family. Component of the chloroplastic Clp protease core complex.

Its subcellular location is the plastid. The protein localises to the chloroplast. The enzyme catalyses Hydrolysis of proteins to small peptides in the presence of ATP and magnesium. alpha-casein is the usual test substrate. In the absence of ATP, only oligopeptides shorter than five residues are hydrolyzed (such as succinyl-Leu-Tyr-|-NHMec, and Leu-Tyr-Leu-|-Tyr-Trp, in which cleavage of the -Tyr-|-Leu- and -Tyr-|-Trp bonds also occurs).. Functionally, cleaves peptides in various proteins in a process that requires ATP hydrolysis. Has a chymotrypsin-like activity. Plays a major role in the degradation of misfolded proteins. This Pinus strobus (Eastern white pine) protein is Putative ATP-dependent Clp protease proteolytic subunit.